The following is a 434-amino-acid chain: Putative ankyrin repeat protein FPV219 (434 aa).

ANK repeat units follow at residues 33–62 (DDLS…DVNL), 66–95 (EVCS…DTDC), 101–131 (HGTP…HEIY), 132–161 (TKNH…DVNT), 165–195 (LYGY…ESYS), 196–225 (LYPS…DVNA), and 229–258 (EGNT…DTSI).

This is Putative ankyrin repeat protein FPV219 from Fowlpox virus (strain NVSL) (FPV).